The following is a 231-amino-acid chain: NADH-ubiquinone oxidoreductase chain 4 (231 aa).

6 helical membrane passes run 1 to 21 (PIAGSMVLAAILLKLGGYGII), 34 to 54 (TFLPFLVLALWGAILANLTCL), 61 to 80 (SLIAYSSISHMGLVVAAIII), 84 to 106 (WGLSGAMALMIAHGFTSSALFCL), 118 to 138 (ILILTRGFHNILPMATTWWLL), and 156 to 178 (LLIMSTLFNWCPTTIILLGLSML).

This sequence belongs to the complex I subunit 4 family.

The protein localises to the mitochondrion membrane. It catalyses the reaction a ubiquinone + NADH + 5 H(+)(in) = a ubiquinol + NAD(+) + 4 H(+)(out). In terms of biological role, core subunit of the mitochondrial membrane respiratory chain NADH dehydrogenase (Complex I) that is believed to belong to the minimal assembly required for catalysis. Complex I functions in the transfer of electrons from NADH to the respiratory chain. The immediate electron acceptor for the enzyme is believed to be ubiquinone. The sequence is that of NADH-ubiquinone oxidoreductase chain 4 (MT-ND4) from Trimeresurus albolabris (White-lipped pit viper).